The primary structure comprises 281 residues: UPF0294 protein VC_2238 (281 aa).

This sequence belongs to the UPF0294 family.

It is found in the cytoplasm. This is UPF0294 protein VC_2238 from Vibrio cholerae serotype O1 (strain ATCC 39315 / El Tor Inaba N16961).